The sequence spans 375 residues: METKYNFVKQQIKSKILEGIVLPHGKIGSENELMKEYNVSRHTVRKAIDELVNEGWVYRKQGAGTFCADRTDQKNPIGKAQRKNIALITTYLSEYIFPSIIRGAESILSEHGYQVTIFSTNNNHEQEKRALEAVLSQRFDGLIVEPTKSSIPNPNINYYLNLERQGIPYVMINAYYEELEPYFLGMDDVKGGYTQTKHLLDLGHEQIVGLFKNDDLQGAKRLKGFIKAHRERGIALNPQHIITYTTEQKNAKPLEELHRIFKDRSHRPTGIVCYNDELALKLLDVIREFDIRVPEELSVVGYDDSFLSVASEVKLTTIQHPKVEMGIDAAKLIISCIEQERKDRSADGEQSIIYEPKLVVRHSTAEAKSEKGVAK.

An HTH gntR-type domain is found at 1-70; sequence METKYNFVKQ…QGAGTFCADR (70 aa). The segment at residues 30–49 is a DNA-binding region (H-T-H motif); that stretch reads ENELMKEYNVSRHTVRKAID.

It localises to the cytoplasm. Transcriptional repressor of the arabinose utilization genes. This Halalkalibacterium halodurans (strain ATCC BAA-125 / DSM 18197 / FERM 7344 / JCM 9153 / C-125) (Bacillus halodurans) protein is Arabinose metabolism transcriptional repressor (araR).